The primary structure comprises 646 residues: Protein real-time (646 aa).

The 174-residue stretch at 2–175 (VQKYESPVRI…FINELKKEGI (174 aa)) folds into the PRELI/MSF1 domain. The CRAL-TRIO domain maps to 294–471 (TPVVVEKYFP…FLGGSCITMI (178 aa)). In terms of domain architecture, GOLD spans 499-646 (HHGLYKSVDL…GFSSNSLQSR (148 aa)).

The protein localises to the mitochondrion. This Aedes aegypti (Yellowfever mosquito) protein is Protein real-time.